Consider the following 265-residue polypeptide: MADS-box protein JOINTLESS (265 aa).

In terms of domain architecture, MADS-box spans 3-57 (REKIQIKKIDNSTARQVTFSKRRRGLFKKAEELSVLCDADVALIIFSSTGKLFDY). Residues 87–177 (QLVENSNYSR…RQQVMEISNN (91 aa)) form the K-box domain. The disordered stretch occupies residues 196 to 232 (ENGFNNNNNEDGQSSESVTNPCNSIDPPPQDDDSSDT). The segment covering 205–218 (EDGQSSESVTNPCN) has biased composition (polar residues).

In terms of tissue distribution, widely expressed with highest levels in shoot tips and axillary buds. Also found in fully developed pedicels and flowers.

Its subcellular location is the nucleus. Putative transcription factor that coordinates gene expression underlying the differentiation of the pedicel abscission zone. May also be involved in the maintenance of the inflorescence meristem state. This is MADS-box protein JOINTLESS (J) from Solanum lycopersicum (Tomato).